The chain runs to 48 residues: Omega-agatoxin-Aa5a (48 aa).

Intrachain disulfides connect Cys3–Cys16, Cys10–Cys21, Cys15–Cys32, and Cys23–Cys30.

Belongs to the neurotoxin 02 (plectoxin) family. As to expression, expressed by the venom gland.

The protein localises to the secreted. Functionally, the toxin blocks voltage-gated calcium channels in rat cerebellar granule cells (IC(50)=200 nM). This Agelenopsis aperta (North American funnel-web spider) protein is Omega-agatoxin-Aa5a.